Here is a 243-residue protein sequence, read N- to C-terminus: Venom nerve growth factor 3 (243 aa).

Residues 1–18 (MSMLCYTLIIAFLIGIWA) form the signal peptide. Residues 19–125 (APKSEDNVPL…ALNRNIRAKR (107 aa)) constitute a propeptide that is removed on maturation. The segment covering 47–66 (GLKTSRNTDQRHPAPKKAED) has biased composition (basic and acidic residues). Positions 47-67 (GLKTSRNTDQRHPAPKKAEDQ) are disordered. 3 cysteine pairs are disulfide-bonded: cysteine 139–cysteine 204, cysteine 182–cysteine 232, and cysteine 192–cysteine 234. Asparagine 148 and asparagine 151 each carry an N-linked (GlcNAc...) asparagine glycan.

It belongs to the NGF-beta family. As to quaternary structure, homodimer; non-covalently linked. In terms of tissue distribution, expressed by the venom gland.

The protein localises to the secreted. Nerve growth factor is important for the development and maintenance of the sympathetic and sensory nervous systems. It stimulates division and differentiation of sympathetic and embryonic sensory neurons as well as basal forebrain cholinergic neurons in the brain. Its relevance in the snake venom is not clear. However, it has been shown to inhibit metalloproteinase-dependent proteolysis of platelet glycoprotein Ib alpha, suggesting a metalloproteinase inhibition to prevent metalloprotease autodigestion and/or protection against prey proteases. Binds a lipid between the two protein chains in the homodimer. The lipid-bound form promotes histamine relase from mouse mast cells, contrary to the lipid-free form. The polypeptide is Venom nerve growth factor 3 (Tropidechis carinatus (Australian rough-scaled snake)).